Here is a 146-residue protein sequence, read N- to C-terminus: Large ribosomal subunit protein uL15 (146 aa).

The interval 1-39 (MTLKLHNLRPAPGAKTAKTRVGRGEGSKGKTAGRGTKGT) is disordered.

It belongs to the universal ribosomal protein uL15 family. In terms of assembly, part of the 50S ribosomal subunit.

Functionally, binds to the 23S rRNA. In Nocardioides sp. (strain ATCC BAA-499 / JS614), this protein is Large ribosomal subunit protein uL15.